The primary structure comprises 1091 residues: Methionine S-methyltransferase (1091 aa).

It belongs to the class I-like SAM-binding methyltransferase superfamily. As to quaternary structure, homotetramer.

It is found in the cytoplasm. It catalyses the reaction L-methionine + S-adenosyl-L-methionine = S-methyl-L-methionine + S-adenosyl-L-homocysteine. Catalyzes the S-methylmethionine (SMM) biosynthesis from adenosyl-L-homocysteine (AdoMet) and methionine. SMM biosynthesis (by MMT1) and degradation (by HMT-1, HMT-2 and HMT-3) constitute the SMM cycle in plants, which is probably required to achieve short term control of AdoMet level. Also able to catalyze the selenium-methylmethionine (SeMM) from AdoMet and selenium-methionine (SeMet). May play a role in phoem sulfur transport; such function is however not essential. This chain is Methionine S-methyltransferase (MMT1), found in Zea mays (Maize).